We begin with the raw amino-acid sequence, 533 residues long: uncharacterized protein (533 aa).

A run of 5 helical transmembrane segments spans residues 4-23 (FLAA…GLAI), 28-47 (VFGL…VVST), 57-79 (IVYQ…PAFF), 86-108 (GWKL…WVLI), and 151-173 (VIGY…AVGA). The 85-residue stretch at 263–347 (LGEERETKIE…VAEVRRFLGD (85 aa)) folds into the RCK C-terminal domain. A run of 4 helical transmembrane segments spans residues 352–374 (LADV…GAIP), 379–401 (GGTT…LGAL), 422–444 (LGLA…AALT), and 454–476 (GGLV…VLRL).

It belongs to the AAE transporter (TC 2.A.81) family.

It is found in the cell membrane. This is an uncharacterized protein from Corynebacterium glutamicum (strain ATCC 13032 / DSM 20300 / JCM 1318 / BCRC 11384 / CCUG 27702 / LMG 3730 / NBRC 12168 / NCIMB 10025 / NRRL B-2784 / 534).